We begin with the raw amino-acid sequence, 95 residues long: U8-barytoxin-Tl1a (95 aa).

The signal sequence occupies residues 1 to 21; that stretch reads MKTLVLVAVLGLASLYLLSYA. A propeptide spanning residues 22–50 is cleaved from the precursor; it reads SEVQQLSVAEEEFGALIDAFGGLLETEER. Intrachain disulfides connect cysteine 57-cysteine 71, cysteine 64-cysteine 76, and cysteine 70-cysteine 86.

It belongs to the neurotoxin 10 (Hwtx-1) family. 26 (ICK-1) subfamily. In terms of tissue distribution, expressed by the venom gland.

It localises to the secreted. Its function is as follows. Ion channel inhibitor. This chain is U8-barytoxin-Tl1a, found in Trittame loki (Brush-footed trapdoor spider).